The sequence spans 493 residues: Chaperone SurA (493 aa).

The signal sequence occupies residues 1-33 (MKRQAFSLLSRLNPWQQLLLSAVLVTLAAPAAA). The segment at 46-76 (FTQQGSQSASQGSTVAPSQPMMGVPQPSSQP) is disordered. Residues 48–58 (QQGSQSASQGS) are compositionally biased toward low complexity. PpiC domains are found at residues 230–332 (PTEF…KLVS) and 346–444 (IAQT…QVEN).

Its subcellular location is the periplasm. It catalyses the reaction [protein]-peptidylproline (omega=180) = [protein]-peptidylproline (omega=0). Its function is as follows. Chaperone involved in the correct folding and assembly of outer membrane proteins. Recognizes specific patterns of aromatic residues and the orientation of their side chains, which are found more frequently in integral outer membrane proteins. May act in both early periplasmic and late outer membrane-associated steps of protein maturation. In Cupriavidus metallidurans (strain ATCC 43123 / DSM 2839 / NBRC 102507 / CH34) (Ralstonia metallidurans), this protein is Chaperone SurA.